The sequence spans 200 residues: 3-isopropylmalate dehydratase small subunit (200 aa).

This sequence belongs to the LeuD family. LeuD type 1 subfamily. As to quaternary structure, heterodimer of LeuC and LeuD.

It catalyses the reaction (2R,3S)-3-isopropylmalate = (2S)-2-isopropylmalate. It participates in amino-acid biosynthesis; L-leucine biosynthesis; L-leucine from 3-methyl-2-oxobutanoate: step 2/4. In terms of biological role, catalyzes the isomerization between 2-isopropylmalate and 3-isopropylmalate, via the formation of 2-isopropylmaleate. The polypeptide is 3-isopropylmalate dehydratase small subunit (Pseudarthrobacter chlorophenolicus (strain ATCC 700700 / DSM 12829 / CIP 107037 / JCM 12360 / KCTC 9906 / NCIMB 13794 / A6) (Arthrobacter chlorophenolicus)).